Consider the following 127-residue polypeptide: Anti-adapter protein IraD (127 aa).

It belongs to the GpW/Gp25 family. IraD subfamily. Interacts with RssB.

Its subcellular location is the cytoplasm. Its function is as follows. Inhibits RpoS proteolysis by regulating RssB activity, thereby increasing the stability of the sigma stress factor RpoS during oxidative stress. Its effect on RpoS stability is due to its interaction with RssB, which probably blocks the interaction of RssB with RpoS, and the consequent delivery of the RssB-RpoS complex to the ClpXP protein degradation pathway. The chain is Anti-adapter protein IraD from Escherichia coli O6:H1 (strain CFT073 / ATCC 700928 / UPEC).